The chain runs to 465 residues: Ribosomal oxygenase 2 (465 aa).

One can recognise a JmjC domain in the interval 139-271 (QPQRFKDELW…NSWGDYLLDS (133 aa)). The Fe cation site is built by His-179, Asp-181, and His-240. Ser-309 is modified (phosphoserine).

The protein belongs to the ROX family. MINA53 subfamily. It depends on Fe(2+) as a cofactor.

The protein resides in the nucleus. It localises to the nucleolus. The catalysed reaction is L-histidyl-[ribosomal protein uL15] + 2-oxoglutarate + O2 = (3S)-3-hydroxy-L-histidyl-[ribosomal protein uL15] + succinate + CO2. It carries out the reaction L-histidyl-[protein] + 2-oxoglutarate + O2 = (3S)-3-hydroxy-L-histidyl-[protein] + succinate + CO2. Oxygenase that can act as both a histone lysine demethylase and a ribosomal histidine hydroxylase. Is involved in the demethylation of trimethylated 'Lys-9' on histone H3 (H3K9me3), leading to an increase in ribosomal RNA expression. Also catalyzes the hydroxylation of 60S ribosomal protein L27a on 'His-39'. May play an important role in cell growth and survival. May be involved in ribosome biogenesis, most likely during the assembly process of pre-ribosomal particles. This Rattus norvegicus (Rat) protein is Ribosomal oxygenase 2.